We begin with the raw amino-acid sequence, 290 residues long: MEKKYELNKNLAQMIKNGVIMDVVNPEQAKIAEEAGAIAVMALERVPSDIRKQGGVARTSDPKMIKEIINAVSIPVMAKVRIGHFVEAQILEAIGVDCIDESEVLTPADDLFHINKKDFKVPFVCGARNLGEALRRIGEGASMIRTKGEAGTGNVVEAVRHMRTISSEMRKLQLTPKEELMTVAKEMGAPFNLIEYVAEKGKLPVINFAAGGIATPADAALMMQLGCDGIFVGSGIFKSDSPEKRAKAIVKATTYFKDPDVLAKVSENLGGAMSGLEISKLETEFAERGW.

Aspartate 22 provides a ligand contact to D-ribose 5-phosphate. The active-site Schiff-base intermediate with D-ribose 5-phosphate is the lysine 79. Glycine 151 provides a ligand contact to D-ribose 5-phosphate. Arginine 163 is a binding site for D-glyceraldehyde 3-phosphate. D-ribose 5-phosphate-binding positions include glycine 212 and 233-234; that span reads GS.

The protein belongs to the PdxS/SNZ family. In the presence of PdxT, forms a dodecamer of heterodimers.

It carries out the reaction aldehydo-D-ribose 5-phosphate + D-glyceraldehyde 3-phosphate + L-glutamine = pyridoxal 5'-phosphate + L-glutamate + phosphate + 3 H2O + H(+). Its pathway is cofactor biosynthesis; pyridoxal 5'-phosphate biosynthesis. In terms of biological role, catalyzes the formation of pyridoxal 5'-phosphate from ribose 5-phosphate (RBP), glyceraldehyde 3-phosphate (G3P) and ammonia. The ammonia is provided by the PdxT subunit. Can also use ribulose 5-phosphate and dihydroxyacetone phosphate as substrates, resulting from enzyme-catalyzed isomerization of RBP and G3P, respectively. This is Pyridoxal 5'-phosphate synthase subunit PdxS from Clostridium botulinum (strain Langeland / NCTC 10281 / Type F).